A 314-amino-acid chain; its full sequence is Ribosomal RNA small subunit methyltransferase H (314 aa).

S-adenosyl-L-methionine-binding positions include 34 to 36, Asp-53, Phe-82, Asp-103, and Gln-110; that span reads GGH.

It belongs to the methyltransferase superfamily. RsmH family.

It is found in the cytoplasm. The enzyme catalyses cytidine(1402) in 16S rRNA + S-adenosyl-L-methionine = N(4)-methylcytidine(1402) in 16S rRNA + S-adenosyl-L-homocysteine + H(+). Functionally, specifically methylates the N4 position of cytidine in position 1402 (C1402) of 16S rRNA. This chain is Ribosomal RNA small subunit methyltransferase H, found in Levilactobacillus brevis (strain ATCC 367 / BCRC 12310 / CIP 105137 / JCM 1170 / LMG 11437 / NCIMB 947 / NCTC 947) (Lactobacillus brevis).